Consider the following 97-residue polypeptide: Ig heavy chain V region 914 (97 aa).

An Ig-like domain is found at 1–97; it reads EVKLVESGGG…EDTAMYYCAR (97 aa).

In Mus musculus (Mouse), this protein is Ig heavy chain V region 914.